The following is a 345-amino-acid chain: Anthranilate phosphoribosyltransferase (345 aa).

5-phospho-alpha-D-ribose 1-diphosphate is bound by residues G80, 83–84 (GD), T88, 90–93 (NIST), 108–116 (KHGNRSVSS), and S120. G80 lines the anthranilate pocket. S92 is a binding site for Mg(2+). Position 111 (N111) interacts with anthranilate. R166 provides a ligand contact to anthranilate. Positions 225 and 226 each coordinate Mg(2+).

It belongs to the anthranilate phosphoribosyltransferase family. Homodimer. Mg(2+) serves as cofactor.

The catalysed reaction is N-(5-phospho-beta-D-ribosyl)anthranilate + diphosphate = 5-phospho-alpha-D-ribose 1-diphosphate + anthranilate. Its pathway is amino-acid biosynthesis; L-tryptophan biosynthesis; L-tryptophan from chorismate: step 2/5. In terms of biological role, catalyzes the transfer of the phosphoribosyl group of 5-phosphorylribose-1-pyrophosphate (PRPP) to anthranilate to yield N-(5'-phosphoribosyl)-anthranilate (PRA). The polypeptide is Anthranilate phosphoribosyltransferase (Desulforamulus reducens (strain ATCC BAA-1160 / DSM 100696 / MI-1) (Desulfotomaculum reducens)).